A 106-amino-acid polypeptide reads, in one-letter code: ADAAPTVSIFPPSMEQLTSGGATVVCFVNNFYPRDISVKWKIDGSEQRDGVLDSVTDQDSKDSTYSMSSTLSLTKVEYERHNLYTCEVVHKTSSSPVVKSFNRNEC.

One can recognise an Ig-like domain in the interval 5 to 102 (PTVSIFPPSM…SSSPVVKSFN (98 aa)). A disulfide bridge connects residues C26 and C86.

This is Ig kappa chain C region, A allele from Rattus norvegicus (Rat).